Consider the following 388-residue polypeptide: MEPSPASGGSETTRLVSPRDRSSAGGGLRLKSLFTEPSEPLPEGPKLEGMAFHHCHKNRVSQSGLSPERAQARRQLYAACVVCFIFMAGEVVGGYLAHSLAIMTDAAHLLADIGSMMASLFSLWLSTRPATRTMTFGWHRSETLGALASVVSLWIVTGILLYLAFLRLLHSDYHIEAGAMLLTASIAVCANMIMAFVLHQTGAPHSHGPRGAEYAPLEEGHGHPLSLGNTSVRAAFVHVLGDLLQSLGVLAASILIYFKPQYKVADPISTFLFSICALGSTAPTLRDVLLVLMEGAPRSVEFEPVRDTLLSVPGVRATHDLHLWALTLTYHVASAHLAIDSTADPEAILAEASSRLYSRFGFSSCTLQVEKYRSEMAHCLRCREPPKA.

A disordered region spans residues 1-42 (MEPSPASGGSETTRLVSPRDRSSAGGGLRLKSLFTEPSEPLP). The Cytoplasmic portion of the chain corresponds to 1-75 (MEPSPASGGS…SPERAQARRQ (75 aa)). Phosphoserine is present on residues Ser63 and Ser66. The helical transmembrane segment at 76–96 (LYAACVVCFIFMAGEVVGGYL) threads the bilayer. Over 97–105 (AHSLAIMTD) the chain is Lumenal. A helical membrane pass occupies residues 106–126 (AAHLLADIGSMMASLFSLWLS). Positions 108 and 112 each coordinate Zn(2+). The Cytoplasmic segment spans residues 127-145 (TRPATRTMTFGWHRSETLG). The chain crosses the membrane as a helical span at residues 146 to 166 (ALASVVSLWIVTGILLYLAFL). At 167 to 177 (RLLHSDYHIEA) the chain is on the lumenal side. The chain crosses the membrane as a helical span at residues 178–198 (GAMLLTASIAVCANMIMAFVL). Over 199 to 235 (HQTGAPHSHGPRGAEYAPLEEGHGHPLSLGNTSVRAA) the chain is Cytoplasmic. The helical transmembrane segment at 236-256 (FVHVLGDLLQSLGVLAASILI) threads the bilayer. The Zn(2+) site is built by His238 and Asp242. At 257–263 (YFKPQYK) the chain is on the lumenal side. The chain crosses the membrane as a helical span at residues 264–284 (VADPISTFLFSICALGSTAPT). At 285-388 (LRDVLLVLME…CLRCREPPKA (104 aa)) the chain is on the cytoplasmic side.

It belongs to the cation diffusion facilitator (CDF) transporter (TC 2.A.4) family. SLC30A subfamily. As to quaternary structure, homodimer. Homodimerization could regulate efficiency of zinc transport. Interacts with TMEM163.

Its subcellular location is the cytoplasmic vesicle. The protein resides in the secretory vesicle. It is found in the synaptic vesicle membrane. It localises to the synapse. The protein localises to the synaptosome. Its subcellular location is the late endosome membrane. The protein resides in the lysosome membrane. The enzyme catalyses Zn(2+)(in) + 2 H(+)(out) = Zn(2+)(out) + 2 H(+)(in). Functionally, probable proton-coupled zinc ion antiporter mediating the import of zinc from cytoplasm into synaptic vesicles and participating to cellular zinc ion homeostasis in the brain. In Rattus norvegicus (Rat), this protein is Probable proton-coupled zinc antiporter SLC30A3.